We begin with the raw amino-acid sequence, 141 residues long: Protein X (141 aa).

Low complexity predominate over residues 24 to 48 (QSSGPPFPRPSAGSAASPASSLSAS). A disordered region spans residues 24 to 51 (QSSGPPFPRPSAGSAASPASSLSASDES). The segment at 68-113 (PCCLVVTCAELRTMDSTVNFVSWHANRQLGMPSKDLWTPYIRDQLL) is mitochondrial targeting sequence.

This sequence belongs to the orthohepadnavirus protein X family. In terms of assembly, may form homodimer. May interact with host CEBPA, CFLAR, CREB1, DDB1, E4F1, HBXIP, HSPD1/HSP60, NFKBIA, POLR2E and SMAD4. Interacts with host SMC5-SMC6 complex and induces its degradation. Interacts with host TRPC4AP; leading to prevent ubiquitination of TRPC4AP. Interacts with host PLSCR1; this interaction promotes ubiquitination and degradation of HBx and impairs HBx-mediated cell proliferation. A fraction may be phosphorylated in insect cells and HepG2 cells, a human hepatoblastoma cell line. Phosphorylated in vitro by host protein kinase C or mitogen-activated protein kinase. N-acetylated in insect cells.

It is found in the host cytoplasm. The protein resides in the host nucleus. It localises to the host mitochondrion. Functionally, multifunctional protein that plays a role in silencing host antiviral defenses and promoting viral transcription. Does not seem to be essential for HBV infection. May be directly involved in development of cirrhosis and liver cancer (hepatocellular carcinoma). Most of cytosolic activities involve modulation of cytosolic calcium. The effect on apoptosis is controversial depending on the cell types in which the studies have been conducted. May induce apoptosis by localizing in mitochondria and causing loss of mitochondrial membrane potential. May also modulate apoptosis by binding host CFLAR, a key regulator of the death-inducing signaling complex (DISC). Promotes viral transcription by using the host E3 ubiquitin ligase DDB1 to target the SMC5-SMC6 complex to proteasomal degradation. This host complex would otherwise bind to viral episomal DNA, and prevents its transcription. Moderately stimulates transcription of many different viral and cellular transcription elements. Promoters and enhancers stimulated by HBx contain DNA binding sites for NF-kappa-B, AP-1, AP-2, c-EBP, ATF/CREB, or the calcium-activated factor NF-AT. This chain is Protein X, found in Woodchuck hepatitis B virus (isolate 1) (WHV).